A 315-amino-acid chain; its full sequence is MNSVIFLGTPQFGATVLEGLIKAGYHILAVVTQPDKKVGRKQKVVYSPVKEVALANDLPLYQPVRLSKSDELDELLQLDADFIITAAFGQFLPTKFLKSAKIAAVNVHGSLLPKYRGGAPIQYAVRNGDAETGVTIMEMVKEMDAGDMYAQASLPIRPDETSGEVFEELAPLGRDLLLETLPKIASGEIVKKPQDPSQVVFSPTISKAEERISLKLTAKEAKNLIRALNPDPGAYLVIKGQRLKVWKAEVADDNTSLPAGHLLTNQGRFAISFAGNTVLNLLEVQPNGKKAMAIKDFLNGQGKKFAAGEKIVDED.

Residue 110 to 113 (SLLP) participates in (6S)-5,6,7,8-tetrahydrofolate binding.

It belongs to the Fmt family.

It carries out the reaction L-methionyl-tRNA(fMet) + (6R)-10-formyltetrahydrofolate = N-formyl-L-methionyl-tRNA(fMet) + (6S)-5,6,7,8-tetrahydrofolate + H(+). In terms of biological role, attaches a formyl group to the free amino group of methionyl-tRNA(fMet). The formyl group appears to play a dual role in the initiator identity of N-formylmethionyl-tRNA by promoting its recognition by IF2 and preventing the misappropriation of this tRNA by the elongation apparatus. This Lactobacillus delbrueckii subsp. bulgaricus (strain ATCC BAA-365 / Lb-18) protein is Methionyl-tRNA formyltransferase.